A 340-amino-acid chain; its full sequence is Chitinase 7 (340 aa).

The first 32 residues, 1–32 (MIAARAANLQVAMKALALAVLALAYAAATARA), serve as a signal peptide directing secretion. Positions 33 to 73 (EQCGRQAGGARCPNRLCCSRWGWCGLTDDYCKGGCQSQCRV) constitute a Chitin-binding type-1 domain. 7 disulfide bridges follow: Cys-35–Cys-50, Cys-44–Cys-56, Cys-49–Cys-63, Cys-67–Cys-71, Cys-118–Cys-173, Cys-185–Cys-193, and Cys-293–Cys-323.

The protein belongs to the glycosyl hydrolase 19 family. Chitinase class I subfamily. Expressed in pistils, stamens and lodicules.

It catalyses the reaction Random endo-hydrolysis of N-acetyl-beta-D-glucosaminide (1-&gt;4)-beta-linkages in chitin and chitodextrins.. Functionally, hydrolyzes chitin and may play a role in defense against fungal pathogens containing chitin. The sequence is that of Chitinase 7 (Cht7) from Oryza sativa subsp. indica (Rice).